The following is a 128-amino-acid chain: Small ribosomal subunit protein uS14m (128 aa).

This sequence belongs to the universal ribosomal protein uS14 family. Component of the mitochondrial ribosome small subunit (28S) which comprises a 12S rRNA and about 30 distinct proteins. Interacts with LIAT1.

The protein resides in the mitochondrion. The sequence is that of Small ribosomal subunit protein uS14m (Mrps14) from Mus musculus (Mouse).